The sequence spans 242 residues: Tyrosine recombinase XerD-like (242 aa).

Residues 1–71 (MKEAIDQFIQ…AVNQFLYFLY (71 aa)) enclose the Core-binding (CB) domain. The region spanning 90 to 242 (ENSSQGSLLD…KSITTLEKYR (153 aa)) is the Tyr recombinase domain. Catalysis depends on residues Lys148 and Arg209. Catalysis depends on Tyr241, which acts as the O-(3'-phospho-DNA)-tyrosine intermediate.

Belongs to the 'phage' integrase family. XerD-like subfamily.

It is found in the cytoplasm. In terms of biological role, putative tyrosine recombinase. Not involved in the cutting and rejoining of the recombining DNA molecules on dif(SL) site. This chain is Tyrosine recombinase XerD-like, found in Streptococcus gordonii (strain Challis / ATCC 35105 / BCRC 15272 / CH1 / DL1 / V288).